Consider the following 737-residue polypeptide: MISVTDIRRAFLDNECHTITKAFGYLHEDKAIALIKIGFHPTYLPKVLYNNVVEFVPEKLYLFKPRTVAPLDLISTITKLKNVDKFASHINYHKNSILITGDKSLIVKCMPYMIISDDDIRFIREQFVGTNSIEYILSFINKESIYRMSYQFSENEIVTIINRDHFMYEPIYEHQVLDSDFLKTMLDRYGIVPINSGIIDELCPEAIIEILMAVVRPRDAIRFLDIVNKNQLTEDSVKNYIINDIRRGKIDYYIPYVEDFLEDRTEDLGIYANIFFEDAIDITKLDITKTELEHISKYMNYYTTYIDHIVNIILQNNYIDILASIIDYVQDVLTEELCIRIVCESTNPVPVTSLPIHSTLVMVMCIQMKYVDIVEFLDEIDIDTLIEKGADPITEYTFTTRWYNKHNDLITLYIKKYGFCPMMMKRLMFEYPLTKEASDHLLKTMDENRGAIMFFPRTICTLPYLLCCNYKLIQKPIPFKEENRNIVYKKNNRVLCFDSLENSAFKSLIKIDSIPGLKTYNMKDITYEKSNNIICVRFIPQESIHNEERRIKLQLFDIARLASYGLYYIPSRYLSSWTPVVNMIEGREYTNPQKIECLVILDLFSEEFIEYQNLGNAVSNKYELEYTISNYQAAINCLMSTLLIYLVLGSIRSISRTENFVLSILNIFYKGLKINELLSEPVSGVCIELNKIKDRASSGDSSFIFLKKNELSKTLSLCEKVCVETILDNNQSFKSSK.

Met1 is subject to N-acetylmethionine; by host. A disulfide bond links Cys496 and Cys535.

It belongs to the orthopoxvirus OPG064 family. Interacts with host KLC2; this interaction promotes IEV trafficking by engaging the host kinesin-1 complex. Interacts with protein OPG056/F12. In terms of processing, N-acetylated on initiator methionine by host.

Plays a role in intracellular enveloped virus (IEV) transport to the cell surface on microtubules. Together with protein OPG056/F12, forms a complex that interacts with host KLC2 (kinesin light chain isoform 2) to engage the kinesin-1 complex and thereby promote IEV trafficking. The chain is Protein OPG064 (OPG064) from Bos taurus (Bovine).